The chain runs to 251 residues: Cell division protein ZapD (251 aa).

Belongs to the ZapD family. As to quaternary structure, interacts with FtsZ.

The protein resides in the cytoplasm. Functionally, cell division factor that enhances FtsZ-ring assembly. Directly interacts with FtsZ and promotes bundling of FtsZ protofilaments, with a reduction in FtsZ GTPase activity. The sequence is that of Cell division protein ZapD from Burkholderia multivorans (strain ATCC 17616 / 249).